A 155-amino-acid chain; its full sequence is Small ribosomal subunit protein uS7cz/uS7cy (155 aa).

Belongs to the universal ribosomal protein uS7 family. Part of the 30S ribosomal subunit.

The protein resides in the plastid. The protein localises to the chloroplast. In terms of biological role, one of the primary rRNA binding proteins, it binds directly to 16S rRNA where it nucleates assembly of the head domain of the 30S subunit. This chain is Small ribosomal subunit protein uS7cz/uS7cy (rps7-A), found in Daucus carota (Wild carrot).